Consider the following 211-residue polypeptide: Ethylene-responsive transcription factor LEP (211 aa).

Disordered regions lie at residues 1–21 (MNTT…TRFL) and 74–110 (NFVY…NDPV). A DNA-binding region (AP2/ERF) is located at residues 19-76 (RFLGVRRRPWGRYAAEIRDPTTKERHWLGTFDTAEEAALAYDRAARSMRGTRARTNFV). A compositionally biased stretch (low complexity) spans 81–92 (PPSSSVTSIVSP). A compositionally biased stretch (pro residues) spans 93-107 (DDPPPPPPPPAPPSN).

The protein belongs to the AP2/ERF transcription factor family. ERF subfamily. In terms of tissue distribution, expressed in germinating seeds. Present in young shoots, at low levels, especially in leaf primordia and developing leaf blades. Also detected in vascular tissue, mostly in xylem, of young leaves, petioles and hypocotyls.

It is found in the nucleus. In terms of biological role, cell division-promoting factor involved in leaf blade differentiation, inflorescence branching, as well as in carpel and silique shape. Promotes the number of xylem cells. Positively regulates the gibberellin signaling pathway leading to germination, hypocotyl elongation, and leaf expansion. Probably acts as a transcriptional activator. Binds to the GCC-box pathogenesis-related promoter element. May be involved in the regulation of gene expression by stress factors and by components of stress signal transduction pathways. The sequence is that of Ethylene-responsive transcription factor LEP (LEP) from Arabidopsis thaliana (Mouse-ear cress).